The chain runs to 66 residues: Large ribosomal subunit protein bL35 (66 aa).

Over residues 1–26 (MPKMKTHRGSAKRFKKTASGKLKRGH) the composition is skewed to basic residues. The disordered stretch occupies residues 1-29 (MPKMKTHRGSAKRFKKTASGKLKRGHAYT).

Belongs to the bacterial ribosomal protein bL35 family.

In Geobacillus kaustophilus (strain HTA426), this protein is Large ribosomal subunit protein bL35.